The sequence spans 205 residues: GTP-binding protein yptV5 (205 aa).

GTP is bound at residue 15–22 (GDSGVGKT). The Effector region signature appears at 37 to 45 (YKATIGADF). GTP is bound by residues 63–67 (DTAGQ) and 125–128 (NKID). Residues C204 and C205 are each lipidated (S-geranylgeranyl cysteine).

The protein belongs to the small GTPase superfamily. Rab family.

It localises to the cell membrane. Its function is as follows. Protein transport. Probably involved in vesicular traffic. The chain is GTP-binding protein yptV5 (YPTV5) from Volvox carteri (Green alga).